Reading from the N-terminus, the 220-residue chain is GTP cyclohydrolase 1 (220 aa).

The Zn(2+) site is built by C109, H112, and C180.

The protein belongs to the GTP cyclohydrolase I family. Toroid-shaped homodecamer, composed of two pentamers of five dimers.

The enzyme catalyses GTP + H2O = 7,8-dihydroneopterin 3'-triphosphate + formate + H(+). It functions in the pathway cofactor biosynthesis; 7,8-dihydroneopterin triphosphate biosynthesis; 7,8-dihydroneopterin triphosphate from GTP: step 1/1. The polypeptide is GTP cyclohydrolase 1 (Yersinia enterocolitica serotype O:8 / biotype 1B (strain NCTC 13174 / 8081)).